Consider the following 561-residue polypeptide: Lysine--tRNA ligase (561 aa).

2 residues coordinate Mg(2+): E409 and E416.

It belongs to the class-II aminoacyl-tRNA synthetase family. As to quaternary structure, homodimer. Requires Mg(2+) as cofactor.

The protein localises to the cytoplasm. It catalyses the reaction tRNA(Lys) + L-lysine + ATP = L-lysyl-tRNA(Lys) + AMP + diphosphate. The polypeptide is Lysine--tRNA ligase (Nostoc punctiforme (strain ATCC 29133 / PCC 73102)).